A 104-amino-acid chain; its full sequence is UPF0473 protein SH1304 (104 aa).

It belongs to the UPF0473 family.

The sequence is that of UPF0473 protein SH1304 from Staphylococcus haemolyticus (strain JCSC1435).